A 367-amino-acid chain; its full sequence is Cystinosin (367 aa).

The signal sequence occupies residues 1–22 (MIRRWLVIFILFPLQLIEKCES). Over 23–125 (TVDFSVPPIV…LVIHSNIVSI (103 aa)) the chain is Lumenal. 5 N-linked (GlcNAc...) asparagine glycosylation sites follow: asparagine 51, asparagine 66, asparagine 84, asparagine 104, and asparagine 107. Positions 123-189 (VSIINQVIGW…LFWVPSIKEQ (67 aa)) constitute a PQ-loop 1 domain. The chain crosses the membrane as a helical span at residues 126–150 (INQVIGWIYFVAWSVSFYPQVITNW). The Cytoplasmic segment spans residues 151 to 159 (RRKSVVGLS). A helical transmembrane segment spans residues 160–179 (FDFVVLNLMGFVAYSVFNIG). Asparagine 166 serves as a coordination point for L-cystine. The Lumenal portion of the chain corresponds to 180 to 202 (LFWVPSIKEQFLLKYPNGVNPVD). The helical transmembrane segment at 203-225 (SNDVFFSLHAVALTLVVIVQCLL) threads the bilayer. H(+) is bound at residue aspartate 205. Over 226-234 (YERGSQRVS) the chain is Cytoplasmic. Residues 235-257 (WLAISFLVLSWLFTLIALIMAAV) form a helical membrane-spanning segment. The Lumenal portion of the chain corresponds to 258 to 263 (GATTWL). The 66-residue stretch at 263–328 (LQFLFCFSYI…QSYNNDQWTL (66 aa)) folds into the PQ-loop 2 domain. The chain crosses the membrane as a helical span at residues 264 to 289 (QFLFCFSYIKLAVTLVKYFPQAYMNF). L-cystine contacts are provided by lysine 273, lysine 280, and tyrosine 281. At 290-298 (HYKSTEGWS) the chain is on the cytoplasmic side. Residues 299–308 (IGNVLLDFTG) form a helical membrane-spanning segment. Asparagine 301 and aspartate 305 together coordinate L-cystine. Residue aspartate 305 coordinates H(+). Over 309–331 (GSFSLLQMFLQSYNNDQWTLIFG) the chain is Lumenal. A helical membrane pass occupies residues 332–354 (DPTKFGLGIFSIIFDVVFFIQHF). Aspartate 346 is a binding site for H(+). At 355-367 (CLYRKKPGYDQLN) the chain is on the cytoplasmic side. Positions 362–366 (GYDQL) match the Lysosomal targeting motif motif.

Belongs to the cystinosin family. In terms of assembly, interacts with components of the V-ATPase complex. Interacts with components of the Ragulator complex. Interacts with RRAGA/RagA and RRAGC/RagC. Interacts with AP-3 complex subunit mu (AP3M1 or AP3M2).

The protein resides in the lysosome membrane. It localises to the melanosome membrane. It carries out the reaction L-cystine(out) + H(+)(out) = L-cystine(in) + H(+)(in). Switches between a lumen- and a cytosol-open conformation: pH induces conformational changes and shifts the equilibrium to facilitate the transition between the lumen- and cytosol-open conformation, thereby promoting cystine transport. Protonation of specific aspartate residues (Asp-205, Asp-305 and Asp-346) favors the cytosol-open conformation. Cystine/H(+) symporter that mediates export of cystine, the oxidized dimer of cysteine, from lysosomes. Plays an important role in melanin synthesis by catalyzing cystine export from melanosomes, possibly by inhibiting pheomelanin synthesis. In addition to cystine export, also acts as a positive regulator of mTORC1 signaling in kidney proximal tubular cells, via interactions with components of the v-ATPase and Ragulator complexes. Also involved in small GTPase-regulated vesicle trafficking and lysosomal localization of LAMP2A, independently of cystine transporter activity. The sequence is that of Cystinosin from Bos taurus (Bovine).